Reading from the N-terminus, the 194-residue chain is Dephospho-CoA kinase (194 aa).

Residues Ile-3 to Gly-194 enclose the DPCK domain. Gly-11–Thr-16 contacts ATP.

It belongs to the CoaE family.

It localises to the cytoplasm. The catalysed reaction is 3'-dephospho-CoA + ATP = ADP + CoA + H(+). Its pathway is cofactor biosynthesis; coenzyme A biosynthesis; CoA from (R)-pantothenate: step 5/5. In terms of biological role, catalyzes the phosphorylation of the 3'-hydroxyl group of dephosphocoenzyme A to form coenzyme A. The sequence is that of Dephospho-CoA kinase from Rhizobium meliloti (strain 1021) (Ensifer meliloti).